The chain runs to 916 residues: Neurofilament medium polypeptide (916 aa).

The segment covering 1–10 (MSYTLDSLGN) has biased composition (polar residues). A disordered region spans residues 1–51 (MSYTLDSLGNPSAYRRVTETRSSFSRVSGSPSSGFRSQSWSRGSPSTVSSS). Ser-2 carries the post-translational modification N-acetylserine. The interval 2 to 104 (SYTLDSLGNP…KLSRSNEKEQ (103 aa)) is head. Residues 21–44 (RSSFSRVSGSPSSGFRSQSWSRGS) show a composition bias toward low complexity. A Phosphoserine modification is found at Ser-30. Position 42 is an omega-N-methylarginine (Arg-42). The O-linked (GlcNAc) threonine glycan is linked to Thr-47. At Ser-99 the chain carries Phosphoserine. The 312-residue stretch at 101-412 (EKEQLQGLND…KLLEGEETRF (312 aa)) folds into the IF rod domain. Positions 105-136 (LQGLNDRFAGYIEKVHYLEQQNKEIEAEIQAL) are coil 1A. Positions 137 to 149 (RQKQASHAQLGDA) are linker 1. A coil 1B region spans residues 150 to 248 (YDQEIRELRA…EEEVADLLAQ (99 aa)). The residue at position 226 (Ser-226) is a Phosphoserine. The linker 12 stretch occupies residues 249–265 (IQASHITVERKDYLKTD). Positions 266-287 (ISTALKEIRSQLESHSDQNMHQ) are coil 2A. Residues 288–291 (AEEW) form a linker 2 region. The tract at residues 292 to 412 (FKCRYAKLTE…KLLEGEETRF (121 aa)) is coil 2B. Phosphotyrosine is present on Tyr-320. Ser-346 and Ser-418 each carry phosphoserine. The interval 413 to 916 (STFAGSITGP…AIVKEVTQSD (504 aa)) is tail. Thr-431 is a glycosylation site (O-linked (GlcNAc) threonine). Residues Ser-467 and Ser-483 each carry the phosphoserine modification. The disordered stretch occupies residues 485-851 (KEEKKEAAEE…KKGGDKSEEK (367 aa)). The segment covering 493-505 (EEKEEEPEAEEEE) has biased composition (acidic residues). Ser-511 carries the post-translational modification Phosphoserine. Residues 521–541 (KEEEGEKEEEEGQEEEEEEDE) show a composition bias toward acidic residues. Basic and acidic residues predominate over residues 542-561 (GAKSDQAEEGGSEKEGSSEK). 4 positions are modified to phosphoserine: Ser-545, Ser-553, Ser-558, and Ser-559. The segment covering 562–582 (EEGEQEEGETEAEAEGEEAEA) has biased composition (acidic residues). Position 571 is a phosphothreonine (Thr-571). Residues 583–614 (KEEKKVEEKSEEVATKEELVADAKVEKPEKAK) are compositionally biased toward basic and acidic residues. Tandem repeats lie at residues 614–626 (KSPV…EEKG), 627–639 (KSPV…EEKG), 640–652 (KSPV…EEKG), 653–665 (KSPV…EEKG), 666–678 (KSPV…EEKA), and 679–691 (KSPV…EEAK). Positions 614-691 (KSPVPKSPVE…VPKSPVEEAK (78 aa)) are 6 X 13 AA approximate tandem repeats of K-S-P-V-[PS]-K-S-P-V-E-E-[KA]-[GAK]. Ser-641 and Ser-646 each carry phosphoserine. Residues Ser-680 and Ser-685 each carry the phosphoserine modification. Basic and acidic residues-rich tracts occupy residues 686-701 (PVEE…KGEQ), 707-742 (KEVK…KEEA), and 755-778 (VHLE…EKAG). A Phosphoserine modification is found at Ser-736. Phosphoserine is present on residues Ser-783, Ser-821, and Ser-837. The span at 788-828 (SDKGAKGSRKEDIAVNGEVEGKEEVEQETKEKGSGREEEKG) shows a compositional bias: basic and acidic residues. Over residues 839-851 (ADEKKGGDKSEEK) the composition is skewed to basic and acidic residues.

It belongs to the intermediate filament family. As to quaternary structure, forms heterodimers with NEFL; which can further hetero-oligomerize (in vitro). Forms heterodimers with INA (in vitro). In terms of processing, there are a number of repeats of the tripeptide K-S-P, NFM is phosphorylated on a number of the serines in this motif. It is thought that phosphorylation of NFM results in the formation of interfilament cross bridges that are important in the maintenance of axonal caliber. Phosphorylation seems to play a major role in the functioning of the larger neurofilament polypeptides (NF-M and NF-H), the levels of phosphorylation being altered developmentally and coincidentally with a change in the neurofilament function. Post-translationally, phosphorylated in the head and rod regions by the PKC kinase PKN1, leading to the inhibition of polymerization.

The protein resides in the cytoplasm. The protein localises to the cytoskeleton. It localises to the cell projection. Its subcellular location is the axon. In terms of biological role, neurofilaments usually contain three intermediate filament proteins: NEFL, NEFM, and NEFH which are involved in the maintenance of neuronal caliber. May additionally cooperate with the neuronal intermediate filament proteins PRPH and INA to form neuronal filamentous networks. The protein is Neurofilament medium polypeptide (NEFM) of Homo sapiens (Human).